Consider the following 181-residue polypeptide: uncharacterized protein (181 aa).

This is an uncharacterized protein from Borreliella burgdorferi (strain ATCC 35210 / DSM 4680 / CIP 102532 / B31) (Borrelia burgdorferi).